Here is a 114-residue protein sequence, read N- to C-terminus: Protein gamma (114 aa).

The chain is Protein gamma (gamma) from Bovine ephemeral fever virus (strain BB7721) (BEFV).